The sequence spans 89 residues: FXYD domain-containing ion transport regulator 4 (89 aa).

The N-terminal stretch at M1 to N20 is a signal peptide. Residues D21 to Q38 are Extracellular-facing. Residues L39–G59 form a helical membrane-spanning segment. Residues K60–C89 lie on the Cytoplasmic side of the membrane.

The protein belongs to the FXYD family. As to quaternary structure, regulatory subunit of the sodium/potassium-transporting ATPase which is composed of a catalytic alpha subunit, a non-catalytic beta subunit and a regulatory subunit. The regulatory subunit, a member of the FXYD protein family, modulates the enzymatic activity in a tissue- and isoform-specific way by changing affinities of the Na+/K+-ATPase toward Na(+), K(+) or ATP.

It is found in the cell membrane. The protein resides in the basolateral cell membrane. Its function is as follows. Associates with and regulates the activity of the sodium/potassium-transporting ATPase (NKA) which catalyzes the hydrolysis of ATP coupled with the exchange of Na(+) and K(+) ions across the plasma membrane. Increases the apparent affinity of the transporter for Na(+) and increases NKA activity. In Homo sapiens (Human), this protein is FXYD domain-containing ion transport regulator 4 (FXYD4).